The sequence spans 549 residues: Probable protein kinase UbiB (549 aa).

The Protein kinase domain occupies 123–501 (NFDDTPLASA…QQKAHKSNYL (379 aa)). ATP is bound by residues 129 to 137 (LASASISQV) and lysine 152. Aspartate 287 (proton acceptor) is an active-site residue. 2 consecutive transmembrane segments (helical) span residues 498–518 (SNYLLITSAVLVICGSILFSQ) and 520–540 (ATLWASYACIGIGATLWLLGW).

The protein belongs to the ABC1 family. UbiB subfamily.

Its subcellular location is the cell inner membrane. It functions in the pathway cofactor biosynthesis; ubiquinone biosynthesis [regulation]. Its function is as follows. Is probably a protein kinase regulator of UbiI activity which is involved in aerobic coenzyme Q (ubiquinone) biosynthesis. This is Probable protein kinase UbiB from Shewanella loihica (strain ATCC BAA-1088 / PV-4).